The primary structure comprises 374 residues: MEVYSGQMGENPHSRGLEMDAEGSRDKSISSPREIGDQVSVDCMDIIKGRLDEISRPASSSSLSENRRKSAEGHRSLEVLSPDLNHTLFQRSIHEMTDQTTETSSDHEDSEEENEDPEMRKAIRKMKKLDRILAHKVSAEREVKQKGRELHQRLWQELQAESLHISSTEAENTRRFLSLTPSDCLECDEEDVFVPVFETEVVDLKTEVNSRPEPEECVEAAGHAEVGQEVTEDRRHTGASHSKSRHDFVKKNIELAGASGSSVFLTQQEKERIEDLLKDLEEELLEEPQLVLSSLSAGQGFSPEPSERHTLFNIDSRLQLLLPMQDFLSVRSSSSQGSLEESTGDQGLWTMRQRRDEERRLREIQEQLQILEET.

Disordered regions lie at residues Met-1 to Leu-80, Glu-95 to Arg-120, and Glu-225 to Ser-244. Composition is skewed to basic and acidic residues over residues Pro-12 to Ser-28, Asp-45 to Ser-55, and Glu-65 to Leu-77. Residues Ser-262–Leu-290 are a coiled coil.

It belongs to the FSIP1 family.

This chain is Fibrous sheath-interacting protein 1 (fsip1), found in Danio rerio (Zebrafish).